We begin with the raw amino-acid sequence, 280 residues long: MAKIIDGKAIAAKIRGEITAEVAKLASKGVTPGLAVVLVGEDPASKVYVSMKEKACKDVGIFSDEYKLPVDTSEADLLLLIHKLNSDPKIHGILIQLPLPKQIDTEKVLEAISPEKDADGFHPYNVGRLVIGKPLFQPCTPYGVMVMLKEAGVELAGKEVVVVGRSNIVGKPVAFMCLQQNATVTLCHSKTRDLAAKVGMADVVIAAVGQPEMIKGAWIKEGAVVIDVGVNRVGEKKLVGDVEFDAAAERASAITPVPGGVGPMTITMLLYNTLEAAKRR.

Residues 164–166, S189, and V230 each bind NADP(+); that span reads GRS.

The protein belongs to the tetrahydrofolate dehydrogenase/cyclohydrolase family. Homodimer.

It catalyses the reaction (6R)-5,10-methylene-5,6,7,8-tetrahydrofolate + NADP(+) = (6R)-5,10-methenyltetrahydrofolate + NADPH. The enzyme catalyses (6R)-5,10-methenyltetrahydrofolate + H2O = (6R)-10-formyltetrahydrofolate + H(+). It functions in the pathway one-carbon metabolism; tetrahydrofolate interconversion. Catalyzes the oxidation of 5,10-methylenetetrahydrofolate to 5,10-methenyltetrahydrofolate and then the hydrolysis of 5,10-methenyltetrahydrofolate to 10-formyltetrahydrofolate. This chain is Bifunctional protein FolD, found in Geotalea uraniireducens (strain Rf4) (Geobacter uraniireducens).